The primary structure comprises 899 residues: Receptor-like protein kinase At3g21340 (899 aa).

Residues 1–27 (MEYHPQAIRLCALIFISFYALLHLVEA) form the signal peptide. Over 28 to 522 (QDQKGFISLD…GAKKMNVVIP (495 aa)) the chain is Extracellular. 10 N-linked (GlcNAc...) asparagine glycosylation sites follow: asparagine 100, asparagine 146, asparagine 185, asparagine 240, asparagine 266, asparagine 420, asparagine 436, asparagine 449, asparagine 468, and asparagine 475. 3 LRR repeats span residues 415–438 (IVTS…QNLT), 439–461 (HLQE…LADI), and 463–485 (SLLV…LLQK). The helical transmembrane segment at 523-543 (IVASVAFVVVLGSALAFFFIF) threads the bilayer. Over 544–899 (KKKKTSNSQD…FDIGATPDAR (356 aa)) the chain is Cytoplasmic. Threonine 583 carries the post-translational modification Phosphothreonine. In terms of domain architecture, Protein kinase spans 592–865 (NNFERVLGKG…QVVIELNECL (274 aa)). ATP is bound by residues 598-606 (LGKGGFGMV) and lysine 620. Tyrosine 665 is subject to Phosphotyrosine. The active-site Proton acceptor is the aspartate 717. At serine 751 the chain carries Phosphoserine. A phosphothreonine mark is found at threonine 752 and threonine 757. Tyrosine 765 is modified (phosphotyrosine).

It belongs to the protein kinase superfamily. Ser/Thr protein kinase family. Post-translationally, autophosphorylated on Tyr and Thr residues.

It is found in the cell membrane. The enzyme catalyses L-seryl-[protein] + ATP = O-phospho-L-seryl-[protein] + ADP + H(+). The catalysed reaction is L-threonyl-[protein] + ATP = O-phospho-L-threonyl-[protein] + ADP + H(+). It carries out the reaction L-tyrosyl-[protein] + ATP = O-phospho-L-tyrosyl-[protein] + ADP + H(+). Functionally, probable receptor with a dual specificity kinase activity acting on both serine/threonine- and tyrosine-containing substrates. This is Receptor-like protein kinase At3g21340 from Arabidopsis thaliana (Mouse-ear cress).